Reading from the N-terminus, the 473-residue chain is UDP-N-acetylmuramate--L-alanine ligase (473 aa).

115-121 (GTHGKTT) lines the ATP pocket.

Belongs to the MurCDEF family.

It localises to the cytoplasm. It carries out the reaction UDP-N-acetyl-alpha-D-muramate + L-alanine + ATP = UDP-N-acetyl-alpha-D-muramoyl-L-alanine + ADP + phosphate + H(+). Its pathway is cell wall biogenesis; peptidoglycan biosynthesis. Functionally, cell wall formation. This Rhizorhabdus wittichii (strain DSM 6014 / CCUG 31198 / JCM 15750 / NBRC 105917 / EY 4224 / RW1) (Sphingomonas wittichii) protein is UDP-N-acetylmuramate--L-alanine ligase.